Consider the following 415-residue polypeptide: Serine hydroxymethyltransferase (415 aa).

The span at 1 to 10 (MERSHIRDVD) shows a compositional bias: basic and acidic residues. The segment at 1-21 (MERSHIRDVDPDAADALSSER) is disordered. Residues leucine 119 and 123-125 (GHL) each bind (6S)-5,6,7,8-tetrahydrofolate. Residue lysine 228 is modified to N6-(pyridoxal phosphate)lysine. 353-355 (SAF) contacts (6S)-5,6,7,8-tetrahydrofolate.

The protein belongs to the SHMT family. In terms of assembly, homodimer. Requires pyridoxal 5'-phosphate as cofactor.

The protein resides in the cytoplasm. It catalyses the reaction (6R)-5,10-methylene-5,6,7,8-tetrahydrofolate + glycine + H2O = (6S)-5,6,7,8-tetrahydrofolate + L-serine. It functions in the pathway one-carbon metabolism; tetrahydrofolate interconversion. The protein operates within amino-acid biosynthesis; glycine biosynthesis; glycine from L-serine: step 1/1. Functionally, catalyzes the reversible interconversion of serine and glycine with tetrahydrofolate (THF) serving as the one-carbon carrier. Also exhibits THF-independent aldolase activity toward beta-hydroxyamino acids, producing glycine and aldehydes, via a retro-aldol mechanism. In Haloquadratum walsbyi (strain DSM 16790 / HBSQ001), this protein is Serine hydroxymethyltransferase.